A 75-amino-acid polypeptide reads, in one-letter code: Guanine nucleotide-binding protein G(I)/G(S)/G(O) subunit gamma-4 (75 aa).

Residue C72 is modified to Cysteine methyl ester. The S-geranylgeranyl cysteine moiety is linked to residue C72. Residues 73 to 75 (TIL) constitute a propeptide, removed in mature form.

The protein belongs to the G protein gamma family. G proteins are composed of 3 units, alpha, beta and gamma. Interacts with beta-1 and beta-2, but not with beta-3. Interacts with KCNK1. Interacts (via C-terminus) with KCNK2/TREK-1 (via N-terminus); this interaction confers ion selectivity to Cl(-) and L-glutamate. As to expression, brain.

It is found in the cell membrane. Its function is as follows. Guanine nucleotide-binding proteins (G proteins) are involved as a modulator or transducer in various transmembrane signaling systems. The beta and gamma chains are required for the GTPase activity, for replacement of GDP by GTP, and for G protein-effector interaction. The protein is Guanine nucleotide-binding protein G(I)/G(S)/G(O) subunit gamma-4 (Gng4) of Mus musculus (Mouse).